The following is a 782-amino-acid chain: Endonuclease MutS2 (782 aa).

336 to 343 is a binding site for ATP; sequence GPNTGGKT. Residues 707–782 form the Smr domain; it reads LDLRGYRYEE…GFGVTVAELK (76 aa).

The protein belongs to the DNA mismatch repair MutS family. MutS2 subfamily. As to quaternary structure, homodimer. Binds to stalled ribosomes, contacting rRNA.

Its function is as follows. Endonuclease that is involved in the suppression of homologous recombination and thus may have a key role in the control of bacterial genetic diversity. Acts as a ribosome collision sensor, splitting the ribosome into its 2 subunits. Detects stalled/collided 70S ribosomes which it binds and splits by an ATP-hydrolysis driven conformational change. Acts upstream of the ribosome quality control system (RQC), a ribosome-associated complex that mediates the extraction of incompletely synthesized nascent chains from stalled ribosomes and their subsequent degradation. Probably generates substrates for RQC. The polypeptide is Endonuclease MutS2 (Staphylococcus carnosus (strain TM300)).